The following is a 389-amino-acid chain: Succinate--CoA ligase [ADP-forming] subunit beta (389 aa).

Positions 9–244 constitute an ATP-grasp domain; the sequence is KEILRKYNVP…LDEEDANEIE (236 aa). Residues Lys46, 53–55, Glu99, Ala102, and Glu107 each bind ATP; that span reads GRG. Asn199 and Asp213 together coordinate Mg(2+). Substrate is bound by residues Asn264 and 321–323; that span reads GIM.

It belongs to the succinate/malate CoA ligase beta subunit family. In terms of assembly, heterotetramer of two alpha and two beta subunits. Requires Mg(2+) as cofactor.

The enzyme catalyses succinate + ATP + CoA = succinyl-CoA + ADP + phosphate. It carries out the reaction GTP + succinate + CoA = succinyl-CoA + GDP + phosphate. It functions in the pathway carbohydrate metabolism; tricarboxylic acid cycle; succinate from succinyl-CoA (ligase route): step 1/1. Succinyl-CoA synthetase functions in the citric acid cycle (TCA), coupling the hydrolysis of succinyl-CoA to the synthesis of either ATP or GTP and thus represents the only step of substrate-level phosphorylation in the TCA. The beta subunit provides nucleotide specificity of the enzyme and binds the substrate succinate, while the binding sites for coenzyme A and phosphate are found in the alpha subunit. The protein is Succinate--CoA ligase [ADP-forming] subunit beta of Cupriavidus pinatubonensis (strain JMP 134 / LMG 1197) (Cupriavidus necator (strain JMP 134)).